The primary structure comprises 710 residues: MRYIVSPQLVLQVGKGQEVERALYLTPYDYIDEKSPIYYFLRSHLNIQQPEIVKRHILLTLRMTQLKGYLGNLLDIKDDIIIYSHKNNLEYSYVDNTIFNPFVYTQKKTLLKNDSFLYNVYSGACDFLVIWVARACDTSIPEFGSYEDVDNNIIKFETMLMEVFPQLDLDITVESKFNNIFRTNLKLTGLKKIIQRVQDLDINYKSLLSRYDEHFINMTGNHFILNDEQLNLSIWDLDGTLALSSDGDTVMINNVKLFTDLVSDIDTQMERIKGDITYKVHLATPINSRIKLDIETSFIFIETATNNILLSSDKKISIILAKNHISIKVKNHIPNIEKYFTFLVIAINAMFNSVQKSADFTKVETVYWSRICQNTKNKNRKPIIINYLDPGMKKISNNFYRSDEKEVFINDNGIMFTCMDPLGKYNKVGFLNIFHDMRKYCIPCCFLHDQSHRSTFSSCVHQIDVEKKIVSPYILNFGKVVTESKMSFLPIIFDAFLNDGMTANMEQDNKRLKETSGYHIVRCCAGDDIVRLRTTSDIIQFVNEDKNILIVNDMVYFPMNASDIGKKIHILIQEIVHEVMIVKKKESSDKIDFFPPNYKLLKDLFPKQTIQTPIQSDAGMVLTTDGFYIDGKLFNEDLSSKYVTFTKNVIASDAVAKYFSPLFKYVISEAKDRFIKTWMINIMIHMNVDPNNIIPTLEKYYPNSGRAQIN.

It belongs to the poxviridae VETF large subunit family. In terms of assembly, heterodimer of a 70 kDa and a 82 kDa subunit. Part of the early transcription complex composed of ETF, RAP94/OPG109, and the DNA-directed RNA polymerase.

It is found in the virion. Functionally, acts with RNA polymerase to initiate transcription from early gene promoters. Is recruited by the RPO-associated protein of 94 kDa RAP94/OPG109 to form the early transcription complex, which also contains the core RNA polymerase. ETF heterodimer binds to early gene promoters. The chain is Early transcription factor 82 kDa subunit (OPG133) from Homo sapiens (Human).